A 476-amino-acid polypeptide reads, in one-letter code: Chromosomal replication initiator protein DnaA (476 aa).

The segment at 1–87 is domain I, interacts with DnaA modulators; that stretch reads MSESSHVGLW…LMYNVLVDKS (87 aa). The domain II stretch occupies residues 87 to 130; the sequence is SSGATVNQESTTRSTAIPQSGLPRVDERKAPGLLRAPAVQDLDP. Residues 131 to 348 form a domain III, AAA+ region region; sequence HLNPNYNFET…GIVISIMAHS (218 aa). G176, G178, K179, and T180 together coordinate ATP. Residues 349-476 are domain IV, binds dsDNA; that stretch reads TIYNKEIDLD…KKRNVSNGER (128 aa).

Belongs to the DnaA family. As to quaternary structure, oligomerizes as a right-handed, spiral filament on DNA at oriC.

It is found in the cytoplasm. Its function is as follows. Plays an essential role in the initiation and regulation of chromosomal replication. ATP-DnaA binds to the origin of replication (oriC) to initiate formation of the DNA replication initiation complex once per cell cycle. Binds the DnaA box (a 9 base pair repeat at the origin) and separates the double-stranded (ds)DNA. Forms a right-handed helical filament on oriC DNA; dsDNA binds to the exterior of the filament while single-stranded (ss)DNA is stabiized in the filament's interior. The ATP-DnaA-oriC complex binds and stabilizes one strand of the AT-rich DNA unwinding element (DUE), permitting loading of DNA polymerase. After initiation quickly degrades to an ADP-DnaA complex that is not apt for DNA replication. Binds acidic phospholipids. This Bacteroides fragilis (strain YCH46) protein is Chromosomal replication initiator protein DnaA.